A 223-amino-acid polypeptide reads, in one-letter code: Small ribosomal subunit protein uS3 (223 aa).

Residues Ile39 to Lys108 enclose the KH type-2 domain.

This sequence belongs to the universal ribosomal protein uS3 family. In terms of assembly, part of the 30S ribosomal subunit. Forms a tight complex with proteins S10 and S14.

In terms of biological role, binds the lower part of the 30S subunit head. Binds mRNA in the 70S ribosome, positioning it for translation. This chain is Small ribosomal subunit protein uS3, found in Clostridium botulinum (strain Hall / ATCC 3502 / NCTC 13319 / Type A).